A 552-amino-acid polypeptide reads, in one-letter code: MTSLREFRKLCCDIYHASGYKEKSKLIRDFITDRDDKYLIIKLLLPGLDDRIYNMNDKQIIKLYSIIFKQSQEDMLQDLGYGYIGDTIRTFFKENTEIRPRDKSILTLEDVDSFLTTLSSVTKESHQIKLLTDIASVCTCNDLKCVVMLIDKDLKIKAGPRYVLNAISPNAYDVFRKSNNLKEIIENSSKQNLDSISISVMTPINPMLAESCDSVNKAFKKFPSGMFAEVKYDGERVQVHKNNNEFAFFSRNMKPVLSHKVDYLKEYIPKAFKKATSIVLDSEIVLVDEHNVPLPFGSLGIHKKKEYKNSNMCLFVFDCLYFDGFDMTDIPLYERRSFLKDVMVEIPNRIVFSELTNISNESQLTDVLDDALTRKLEGLVLKDINGVYEPGKRRWLKIKRDYLNEGSMADSADLVVLGAYYGKGAKGGIMAVFLMGCYDDESGKWKTVTKCSGHDDNTLRVLQDQLTMIKINKDPKKIPEWLVVNKIYIPDFVVEDPKQSQIWEISGAEFTSSKSHTANGISIRFPRFTRIREDKTWKESTHLNDLVNLTKS.

Glutamate 229 provides a ligand contact to ATP. Lysine 231 (N6-AMP-lysine intermediate) is an active-site residue. Residues arginine 236 and glutamate 283 each contribute to the ATP site. Glutamate 283 and glutamate 377 together coordinate Mg(2+). Residues lysine 382 and lysine 397 each contribute to the ATP site.

The protein belongs to the ATP-dependent DNA ligase family. Interacts with host TOP2A and TOP2B. Mg(2+) is required as a cofactor.

Its subcellular location is the host cytoplasm. The catalysed reaction is ATP + (deoxyribonucleotide)n-3'-hydroxyl + 5'-phospho-(deoxyribonucleotide)m = (deoxyribonucleotide)n+m + AMP + diphosphate.. Functionally, DNA ligase that seals nicks in double-stranded DNA during DNA replication, DNA recombination and DNA repair. Recruits cellular topoisomerase II to sites of viral replication and assembly. The sequence is that of DNA ligase (OPG180) from Vaccinia virus (strain Copenhagen) (VACV).